We begin with the raw amino-acid sequence, 2662 residues long: Centrosome-associated protein CEP250L1 (2662 aa).

2 coiled-coil regions span residues 1030 to 1248 (KVHY…EEEE) and 1281 to 1719 (ARTH…IDAQ).

The protein resides in the cytoplasm. It localises to the cytoskeleton. It is found in the microtubule organizing center. The protein localises to the centrosome. In terms of biological role, part of the centrosome inner core complex. Plays a role in the formation and/or stabilization of the mitotic spindle. Required for proper nuclear segregation and DNA partitioning during cell division. The sequence is that of Centrosome-associated protein CEP250L1 from Toxoplasma gondii (strain ATCC 50611 / Me49).